A 260-amino-acid chain; its full sequence is Ribonuclease PH (260 aa).

Phosphate contacts are provided by residues Arg-88 and Gly-126–Arg-128.

The protein belongs to the RNase PH family. In terms of assembly, homohexameric ring arranged as a trimer of dimers.

The enzyme catalyses tRNA(n+1) + phosphate = tRNA(n) + a ribonucleoside 5'-diphosphate. Functionally, phosphorolytic 3'-5' exoribonuclease that plays an important role in tRNA 3'-end maturation. Removes nucleotide residues following the 3'-CCA terminus of tRNAs; can also add nucleotides to the ends of RNA molecules by using nucleoside diphosphates as substrates, but this may not be physiologically important. Probably plays a role in initiation of 16S rRNA degradation (leading to ribosome degradation) during starvation. This is Ribonuclease PH from Mycolicibacterium gilvum (strain PYR-GCK) (Mycobacterium gilvum (strain PYR-GCK)).